We begin with the raw amino-acid sequence, 76 residues long: uncharacterized protein (76 aa).

2 consecutive transmembrane segments (helical) span residues 16 to 33 and 45 to 61; these read FAFTLLAVSTFLYIGAVL and TMFLADCVFLAGAFFCA.

The protein resides in the cell membrane. This is an uncharacterized protein from Bacillus subtilis (strain 168).